The following is a 343-amino-acid chain: General transcription and DNA repair factor IIH subunit TFB6 (343 aa).

Tyr69 is subject to Phosphotyrosine. Thr71 and Thr84 each carry phosphothreonine. Residues Ser104, Ser105, Ser108, and Ser342 each carry the phosphoserine modification.

Component of the general transcription factor TFIIH, composed of a 7-subunit TFIIH core complex composed of XPB/SSL2, XPD/RAD3, SSL1, TFB1, TFB2, TFB4 and TFB5 which is active in NER; the 3-subunit CTD-kinase module TFIIK composed of CCL1, KIN28, and TFB3 which is active in transcription; as well as TFB6 that regulates SSL2 association with the complex. In terms of processing, phosphorylation leads the dissociation of from SSL2.

It localises to the cytoplasm. Its subcellular location is the nucleus. Functionally, component of the general transcription and DNA repair factor IIH (TFIIH) core complex, which is involved in general and transcription-coupled nucleotide excision repair (NER) of damaged DNA and, when complexed to TFIIK, in RNA transcription by RNA polymerase II. In NER, TFIIH acts by opening DNA around the lesion to allow the excision of the damaged oligonucleotide and its replacement by a new DNA fragment. In transcription, TFIIH has an essential role in transcription initiation. When the pre-initiation complex (PIC) has been established, TFIIH is required for promoter opening and promoter escape. Phosphorylation of the C-terminal tail (CTD) of the largest subunit of RNA polymerase II by the kinase module TFIIK controls the initiation of transcription. TFB6 facilitates dissociation of the SSL2 helicase from TFIIH after transcription initiation. This is General transcription and DNA repair factor IIH subunit TFB6 from Saccharomyces cerevisiae (strain ATCC 204508 / S288c) (Baker's yeast).